Here is a 272-residue protein sequence, read N- to C-terminus: Microcin B17-processing protein McbC (272 aa).

The protein to R.leguminosarum TfxB which is involved in the processing of trifolitoxin.

Its subcellular location is the cytoplasm. Necessary to process the inactive microcin B17 (McbA) precursor into the active peptide. This is Microcin B17-processing protein McbC (mcbC) from Escherichia coli.